The sequence spans 483 residues: Glutamate--tRNA ligase (483 aa).

The 'HIGH' region motif lies at 9–19 (PSPTGYLHIGN). The 'KMSKS' region signature appears at 250-254 (KLSKR). Lysine 253 lines the ATP pocket.

It belongs to the class-I aminoacyl-tRNA synthetase family. Glutamate--tRNA ligase type 1 subfamily. Monomer.

It localises to the cytoplasm. It carries out the reaction tRNA(Glu) + L-glutamate + ATP = L-glutamyl-tRNA(Glu) + AMP + diphosphate. Functionally, catalyzes the attachment of glutamate to tRNA(Glu) in a two-step reaction: glutamate is first activated by ATP to form Glu-AMP and then transferred to the acceptor end of tRNA(Glu). The chain is Glutamate--tRNA ligase from Blochmanniella floridana.